The chain runs to 1131 residues: PPi-type phosphoenolpyruvate carboxykinase (1131 aa).

Belongs to the PPi-type phosphoenolpyruvate carboxykinase family. In terms of assembly, monomer and trimer; forms heterotrimers with PEPCK2 and PEPCK3.

It carries out the reaction oxaloacetate + diphosphate = phosphoenolpyruvate + phosphate + CO2. Its function is as follows. Inorganic pyrophosphate (PPi)-dependent phosphoenolpyruvate carboxykinase, which regulates the carbon flow of the central metabolism by fixing CO(2) to phosphoenolpyruvate to produce oxaloacetate. Can also produce pyruvate and diphosphate from phosphoenolpyruvate and phosphate. The sequence is that of PPi-type phosphoenolpyruvate carboxykinase from Propionibacterium freudenreichii subsp. freudenreichii.